A 453-amino-acid polypeptide reads, in one-letter code: Ribosomal protein uS12 methylthiotransferase RimO (453 aa).

One can recognise an MTTase N-terminal domain in the interval 9–124 (PKVGFVSLGC…VMEAVHTHLP (116 aa)). Residues cysteine 18, cysteine 54, cysteine 83, cysteine 155, cysteine 159, and cysteine 162 each coordinate [4Fe-4S] cluster. The Radical SAM core domain maps to 141-382 (LTPKHYAYLK…MEVAERVSAR (242 aa)). The TRAM domain occupies 385-453 (QRKVGKTLRV…ADGHDLWGEV (69 aa)).

The protein belongs to the methylthiotransferase family. RimO subfamily. [4Fe-4S] cluster serves as cofactor.

The protein resides in the cytoplasm. It carries out the reaction L-aspartate(89)-[ribosomal protein uS12]-hydrogen + (sulfur carrier)-SH + AH2 + 2 S-adenosyl-L-methionine = 3-methylsulfanyl-L-aspartate(89)-[ribosomal protein uS12]-hydrogen + (sulfur carrier)-H + 5'-deoxyadenosine + L-methionine + A + S-adenosyl-L-homocysteine + 2 H(+). Catalyzes the methylthiolation of an aspartic acid residue of ribosomal protein uS12. This is Ribosomal protein uS12 methylthiotransferase RimO from Ralstonia nicotianae (strain ATCC BAA-1114 / GMI1000) (Ralstonia solanacearum).